Consider the following 232-residue polypeptide: Phosphatidylserine decarboxylase proenzyme (232 aa).

The active-site Schiff-base intermediate with substrate; via pyruvic acid is the S190. S190 bears the Pyruvic acid (Ser); by autocatalysis mark.

This sequence belongs to the phosphatidylserine decarboxylase family. PSD-A subfamily. As to quaternary structure, heterodimer of a large membrane-associated beta subunit and a small pyruvoyl-containing alpha subunit. It depends on pyruvate as a cofactor. Post-translationally, is synthesized initially as an inactive proenzyme. Formation of the active enzyme involves a self-maturation process in which the active site pyruvoyl group is generated from an internal serine residue via an autocatalytic post-translational modification. Two non-identical subunits are generated from the proenzyme in this reaction, and the pyruvate is formed at the N-terminus of the alpha chain, which is derived from the carboxyl end of the proenzyme. The post-translation cleavage follows an unusual pathway, termed non-hydrolytic serinolysis, in which the side chain hydroxyl group of the serine supplies its oxygen atom to form the C-terminus of the beta chain, while the remainder of the serine residue undergoes an oxidative deamination to produce ammonia and the pyruvoyl prosthetic group on the alpha chain.

Its subcellular location is the cell membrane. It carries out the reaction a 1,2-diacyl-sn-glycero-3-phospho-L-serine + H(+) = a 1,2-diacyl-sn-glycero-3-phosphoethanolamine + CO2. It participates in phospholipid metabolism; phosphatidylethanolamine biosynthesis; phosphatidylethanolamine from CDP-diacylglycerol: step 2/2. Catalyzes the formation of phosphatidylethanolamine (PtdEtn) from phosphatidylserine (PtdSer). In Rhizobium leguminosarum bv. trifolii (strain WSM2304), this protein is Phosphatidylserine decarboxylase proenzyme.